A 196-amino-acid polypeptide reads, in one-letter code: dTTP/UTP pyrophosphatase (196 aa).

The active-site Proton acceptor is aspartate 75.

It belongs to the Maf family. YhdE subfamily. Requires a divalent metal cation as cofactor.

The protein localises to the cytoplasm. It carries out the reaction dTTP + H2O = dTMP + diphosphate + H(+). The catalysed reaction is UTP + H2O = UMP + diphosphate + H(+). In terms of biological role, nucleoside triphosphate pyrophosphatase that hydrolyzes dTTP and UTP. May have a dual role in cell division arrest and in preventing the incorporation of modified nucleotides into cellular nucleic acids. The polypeptide is dTTP/UTP pyrophosphatase (Wolbachia pipientis subsp. Culex pipiens (strain wPip)).